The sequence spans 136 residues: MARTKQTARKSTGGKAPRKQLATKAARKSAPATGGVKKPHRYRPGTVALREIRRYQKSTELLIRKLPFQRLVREIAQDFKTDLRFQSSAVMALQEASEAYLVGLFEDTNLCAIHAKRVTIMPKDIQLARRIRGERA.

The disordered stretch occupies residues Met-1 to Arg-43. The residue at position 5 (Lys-5) is an N6-methylated lysine. Residue Lys-10 is modified to N6-acetyllysine; alternate. The residue at position 10 (Lys-10) is an N6-methylated lysine; alternate. A Phosphoserine modification is found at Ser-11. 2 positions are modified to N6-acetyllysine: Lys-15 and Lys-24. N6-methylated lysine is present on residues Lys-28, Lys-37, and Lys-80.

Belongs to the histone H3 family. As to quaternary structure, the nucleosome is a histone octamer containing two molecules each of H2A, H2B, H3 and H4 assembled in one H3-H4 heterotetramer and two H2A-H2B heterodimers. The octamer wraps approximately 147 bp of DNA. Acetylation is generally linked to gene activation. In terms of processing, methylation at Lys-5 is linked to gene activation. Methylation at Lys-10 is linked to gene repression.

The protein localises to the nucleus. Its subcellular location is the chromosome. Its function is as follows. Core component of nucleosome. Nucleosomes wrap and compact DNA into chromatin, limiting DNA accessibility to the cellular machineries which require DNA as a template. Histones thereby play a central role in transcription regulation, DNA repair, DNA replication and chromosomal stability. DNA accessibility is regulated via a complex set of post-translational modifications of histones, also called histone code, and nucleosome remodeling. This is Histone H3 from Platynereis dumerilii (Dumeril's clam worm).